The sequence spans 203 residues: E3 ubiquitin-protein ligase RNF152 (203 aa).

Residues 12-55 (CQICFNYYSPRRRPKLLDCKHTCCSVCLQQMRTSQKDVRCPWCR) form an RING-type zinc finger. The segment at 106 to 165 (ISKERALLPGDMGCRLLPGSQQKSVTVVTIPAEQQPLQGGAPQEAVEEEQDRRGVVKSST) is necessary for interaction with RRAGA. Residues 167-187 (SGVCTVILVACVLVFLLGIVL) traverse the membrane as a helical segment.

The protein belongs to the RNF152 family. Interacts with RRAGA (inactive GDP-bound form); stimulated by amino acid starvation. Interacts with SEC16A. Post-translationally, ubiquitinated. Autoubiquitinated in vitro, leading to its degradation by the proteasome. Widely expressed.

It is found in the lysosome membrane. It catalyses the reaction S-ubiquitinyl-[E2 ubiquitin-conjugating enzyme]-L-cysteine + [acceptor protein]-L-lysine = [E2 ubiquitin-conjugating enzyme]-L-cysteine + N(6)-ubiquitinyl-[acceptor protein]-L-lysine.. It participates in protein modification; protein ubiquitination. Its function is as follows. E3 ubiquitin-protein ligase that acts as a negative regulator of mTORC1 signaling by mediating ubiquitination of RagA/RRAGA and RHEB. Catalyzes 'Lys-63'-linked polyubiquitination of RagA/RRAGA in response to amino acid starvation, thereby regulating mTORC1 signaling. Also mediates monoubiquitination of RHEB, promoting its association with the TSC-TBC complex and subsequent inhibition. Also mediates 'Lys-48'-linked polyubiquitination of target proteins and their subsequent targeting to the proteasome for degradation. Induces apoptosis when overexpressed. This chain is E3 ubiquitin-protein ligase RNF152, found in Homo sapiens (Human).